The sequence spans 182 residues: Large ribosomal subunit protein uL6 (182 aa).

Belongs to the universal ribosomal protein uL6 family. As to quaternary structure, part of the 50S ribosomal subunit.

Functionally, this protein binds to the 23S rRNA, and is important in its secondary structure. It is located near the subunit interface in the base of the L7/L12 stalk, and near the tRNA binding site of the peptidyltransferase center. This is Large ribosomal subunit protein uL6 from Caldicellulosiruptor bescii (strain ATCC BAA-1888 / DSM 6725 / KCTC 15123 / Z-1320) (Anaerocellum thermophilum).